The chain runs to 236 residues: Small ribosomal subunit protein eS6 (236 aa).

Belongs to the eukaryotic ribosomal protein eS6 family. Component of the small ribosomal subunit. Mature ribosomes consist of a small (40S) and a large (60S) subunit. The 40S subunit contains about 32 different proteins and 1 molecule of RNA (18S). The 60S subunit contains 45 different proteins and 3 molecules of RNA (25S, 5.8S and 5S).

It is found in the cytoplasm. Functionally, component of the ribosome, a large ribonucleoprotein complex responsible for the synthesis of proteins in the cell. The small ribosomal subunit (SSU) binds messenger RNAs (mRNAs) and translates the encoded message by selecting cognate aminoacyl-transfer RNA (tRNA) molecules. The large subunit (LSU) contains the ribosomal catalytic site termed the peptidyl transferase center (PTC), which catalyzes the formation of peptide bonds, thereby polymerizing the amino acids delivered by tRNAs into a polypeptide chain. The nascent polypeptides leave the ribosome through a tunnel in the LSU and interact with protein factors that function in enzymatic processing, targeting, and the membrane insertion of nascent chains at the exit of the ribosomal tunnel. RPS6A is involved in nucleolar processing of pre-18S ribosomal RNA and ribosome assembly. The polypeptide is Small ribosomal subunit protein eS6 (RPS6A) (Candida albicans (strain SC5314 / ATCC MYA-2876) (Yeast)).